Reading from the N-terminus, the 640-residue chain is Threonine--tRNA ligase (640 aa).

The TGS domain maps to 1–61 (MPVITLPDGS…SNDATLQIIT (61 aa)). The tract at residues 242–533 (DHRKIGKQLD…LIEHYAGVFP (292 aa)) is catalytic. Positions 333, 384, and 510 each coordinate Zn(2+).

Belongs to the class-II aminoacyl-tRNA synthetase family. In terms of assembly, homodimer. Zn(2+) is required as a cofactor.

It is found in the cytoplasm. The enzyme catalyses tRNA(Thr) + L-threonine + ATP = L-threonyl-tRNA(Thr) + AMP + diphosphate + H(+). Catalyzes the attachment of threonine to tRNA(Thr) in a two-step reaction: L-threonine is first activated by ATP to form Thr-AMP and then transferred to the acceptor end of tRNA(Thr). Also edits incorrectly charged L-seryl-tRNA(Thr). The polypeptide is Threonine--tRNA ligase (Pseudomonas putida (strain ATCC 47054 / DSM 6125 / CFBP 8728 / NCIMB 11950 / KT2440)).